We begin with the raw amino-acid sequence, 216 residues long: Ribonuclease HII (216 aa).

Residues tryptophan 33–leucine 216 enclose the RNase H type-2 domain. A divalent metal cation-binding residues include aspartate 39, glutamate 40, and aspartate 130.

The protein belongs to the RNase HII family. It depends on Mn(2+) as a cofactor. Mg(2+) is required as a cofactor.

It localises to the cytoplasm. It carries out the reaction Endonucleolytic cleavage to 5'-phosphomonoester.. In terms of biological role, endonuclease that specifically degrades the RNA of RNA-DNA hybrids. This chain is Ribonuclease HII, found in Sinorhizobium medicae (strain WSM419) (Ensifer medicae).